A 142-amino-acid polypeptide reads, in one-letter code: Universal stress protein D (142 aa).

This sequence belongs to the universal stress protein A family.

The protein localises to the cytoplasm. Functionally, required for resistance to DNA-damaging agents. The sequence is that of Universal stress protein D (uspD) from Escherichia coli (strain K12).